The sequence spans 320 residues: Stress-induced-phosphoprotein 1 (320 aa).

TPR repeat units lie at residues 5 to 38 (AIAE…DPSN), 40 to 72 (TFYN…GRET), 80 to 113 (AKAM…FRDP), 140 to 173 (AQEE…DPEN), 175 to 207 (ILYS…DSKF), and 208 to 241 (IKGY…DPSN). The tract at residues 241 to 269 (NEEAREGVRNCLRSNDEDPEKAKERSLAD) is disordered. Over residues 242–269 (EEAREGVRNCLRSNDEDPEKAKERSLAD) the composition is skewed to basic and acidic residues. Positions 269-308 (DPEVQEILRDPGMRMILEQMSNDPGAVREHLKNPEIFQKL) constitute an STI1 domain.

Forms a complex with hsp-1/hsp70 and daf-21/hsp90. Interacts with daf-21/hsp90 (via the C-terminal MEEVD pentapeptide). Expressed ubiquitously in the whole body. Detected predominantly in the pharyngeal muscles, vulva epithelial cells, striated body-wall muscles, spermathecae and intestinal cell ring. Also observed in the tail regions of hermaphrodite and in the sensory rays and spicules of males.

The protein resides in the cytoplasm. Plays a role in gonad development. Up-regulates longevity and thermotolerance. Binds daf-21/hsp90 and inhibits its ATPase activity. This chain is Stress-induced-phosphoprotein 1, found in Caenorhabditis elegans.